A 975-amino-acid chain; its full sequence is Probable ATP-dependent RNA helicase CG8611 (975 aa).

Residues 1–24 are compositionally biased toward polar residues; that stretch reads MVENISLNVTVKSSARKNQQQSPA. 3 disordered regions span residues 1-38, 50-104, and 127-295; these read MVEN…QDFD, AIVV…DDLM, and TTKP…FRTK. Residues 64–94 are compositionally biased toward low complexity; the sequence is PTNSSVPNTTKSPTPSVSSSKSAISTLSASP. Phosphoserine occurs at positions 75 and 99. Positions 190–203 are enriched in basic and acidic residues; that stretch reads QLEEERRQKRREEG. Phosphoserine occurs at positions 210, 220, and 224. The span at 242–261 shows a compositional bias: acidic residues; the sequence is IEDSGESGEESATSDEEPDE. Residues 269-285 show a composition bias toward basic and acidic residues; that stretch reads QEKEPKQTAKKPPKAEE. The Q motif signature appears at 327–356; the sequence is SKISTLGLHPHAVKNLEDLLSIRELTSVQQ. A Helicase ATP-binding domain is found at 359–548; that stretch reads IPEVLQGKDV…GLTLKNPLYI (190 aa). 372 to 379 is a binding site for ATP; sequence SQTGSGKT. The short motif at 485–488 is the DEAD box element; it reads DEAD. A Helicase C-terminal domain is found at 616–789; sequence LLAKEVDASP…DMYAYLQTLL (174 aa). Ser667 is modified (phosphoserine). Disordered regions lie at residues 915 to 942 and 955 to 975; these read LQQR…VGRS and NMSE…RKQA.

This sequence belongs to the DEAD box helicase family. DDX31/DBP7 subfamily.

It catalyses the reaction ATP + H2O = ADP + phosphate + H(+). Probable ATP-dependent RNA helicase. This Drosophila melanogaster (Fruit fly) protein is Probable ATP-dependent RNA helicase CG8611.